The chain runs to 213 residues: Large ribosomal subunit protein uL23 (213 aa).

Residues 1–117 (MNHNEIIKYP…KSTSELKLEE (117 aa)) form a large ribosomal subunit protein uL23 region. Residues 118 to 213 (KIAAKIAAKE…TTKKTTTKKV (96 aa)) form a unknown region.

The protein belongs to the universal ribosomal protein uL23 family. Part of the 50S ribosomal subunit. Contacts protein L29, and trigger factor when it is bound to the ribosome.

Its function is as follows. One of the early assembly proteins it binds 23S rRNA. One of the proteins that surrounds the polypeptide exit tunnel on the outside of the ribosome. Forms the main docking site for trigger factor binding to the ribosome. This chain is Large ribosomal subunit protein uL23, found in Mycoplasma mobile (strain ATCC 43663 / 163K / NCTC 11711) (Mesomycoplasma mobile).